Here is a 299-residue protein sequence, read N- to C-terminus: Hemolysin C homolog (299 aa).

2 consecutive CBS domains span residues Met80–Leu142 and Leu145–Glu202.

This sequence belongs to the UPF0053 family. Hemolysin C subfamily.

In Rickettsia conorii (strain ATCC VR-613 / Malish 7), this protein is Hemolysin C homolog (tlyC).